The sequence spans 432 residues: Tol-Pal system protein TolB (432 aa).

Positions 1 to 21 (MSTLIRIALFALALMAGAAQA) are cleaved as a signal peptide.

The protein belongs to the TolB family. The Tol-Pal system is composed of five core proteins: the inner membrane proteins TolA, TolQ and TolR, the periplasmic protein TolB and the outer membrane protein Pal. They form a network linking the inner and outer membranes and the peptidoglycan layer.

The protein resides in the periplasm. In terms of biological role, part of the Tol-Pal system, which plays a role in outer membrane invagination during cell division and is important for maintaining outer membrane integrity. This chain is Tol-Pal system protein TolB, found in Pseudomonas aeruginosa (strain ATCC 15692 / DSM 22644 / CIP 104116 / JCM 14847 / LMG 12228 / 1C / PRS 101 / PAO1).